A 553-amino-acid polypeptide reads, in one-letter code: Zinc finger CCHC domain-containing protein 8 homolog (553 aa).

Phosphoserine is present on S59. The segment at 183–200 (SSCFNCGDTEHSLRDCTK) adopts a CCHC-type zinc-finger fold. Phosphoserine occurs at positions 292 and 347. Residue Y356 is modified to Phosphotyrosine. The segment at 388-492 (LEEETEDPPL…APSTPFKASY (105 aa)) is disordered. Over residues 395-409 (PPLPPSVPPPQPPPP) the composition is skewed to pro residues. Residues S421 and S423 each carry the phosphoserine modification. 2 stretches are compositionally biased toward polar residues: residues 444 to 456 (ASHN…SKSP) and 473 to 485 (ESGN…SAPS).

This sequence belongs to the ZCCHC8 family.

It localises to the nucleus. Its subcellular location is the nucleoplasm. In terms of biological role, scaffolding subunit of the trimeric nuclear exosome targeting (NEXT) complex, a complex that directs a subset of non-coding short-lived RNAs for exosomal degradation. The RNA exosome is fundamental for the degradation of RNA in eukaryotic nuclei. May be involved in pre-mRNA splicing. This Drosophila melanogaster (Fruit fly) protein is Zinc finger CCHC domain-containing protein 8 homolog.